The sequence spans 72 residues: UPF0495 protein KLLA0D04334g (72 aa).

The chain crosses the membrane as a helical span at residues 20 to 42 (PVELTPLFLAMGVALASGTWFSY).

It belongs to the UPF0495 family.

The protein localises to the membrane. The chain is UPF0495 protein KLLA0D04334g from Kluyveromyces lactis (strain ATCC 8585 / CBS 2359 / DSM 70799 / NBRC 1267 / NRRL Y-1140 / WM37) (Yeast).